The sequence spans 388 residues: 1-deoxy-D-xylulose 5-phosphate reductoisomerase (388 aa).

7 residues coordinate NADPH: Thr-13, Gly-14, Ser-15, Ile-16, Arg-40, Asn-41, and Asn-124. Lys-125 contacts 1-deoxy-D-xylulose 5-phosphate. Glu-126 is an NADPH binding site. Mn(2+) is bound at residue Asp-150. Ser-151, Glu-152, Ser-176, and His-199 together coordinate 1-deoxy-D-xylulose 5-phosphate. Residue Glu-152 participates in Mn(2+) binding. Position 205 (Gly-205) interacts with NADPH. 1-deoxy-D-xylulose 5-phosphate contacts are provided by Ser-212, Asn-217, Lys-218, and Glu-221. Mn(2+) is bound at residue Glu-221.

Belongs to the DXR family. In terms of assembly, homodimer. It depends on Mg(2+) as a cofactor. The cofactor is Mn(2+). Co(2+) is required as a cofactor.

The catalysed reaction is 2-C-methyl-D-erythritol 4-phosphate + NADP(+) = 1-deoxy-D-xylulose 5-phosphate + NADPH + H(+). The protein operates within isoprenoid biosynthesis; isopentenyl diphosphate biosynthesis via DXP pathway; isopentenyl diphosphate from 1-deoxy-D-xylulose 5-phosphate: step 1/6. With respect to regulation, competitively inhibited by the antibiotic fosmidomycin. Its function is as follows. Catalyzes the NADPH-dependent rearrangement and reduction of 1-deoxy-D-xylulose-5-phosphate (DXP) to 2-C-methyl-D-erythritol 4-phosphate (MEP). Cannot use NADH instead of NADPH as the reducing agent. This is 1-deoxy-D-xylulose 5-phosphate reductoisomerase from Zymomonas mobilis subsp. mobilis (strain ATCC 31821 / ZM4 / CP4).